Here is a 419-residue protein sequence, read N- to C-terminus: Tyrosine--tRNA ligase (419 aa).

Tyr-42 is an L-tyrosine binding site. The short motif at Ala-47–Ser-56 is the 'HIGH' region element. L-tyrosine-binding residues include Tyr-179 and Gln-183. Residues Lys-239–Thr-243 carry the 'KMSKS' region motif. Lys-242 serves as a coordination point for ATP. One can recognise an S4 RNA-binding domain in the interval Val-353–Pro-418.

Belongs to the class-I aminoacyl-tRNA synthetase family. TyrS type 1 subfamily. As to quaternary structure, homodimer.

It localises to the cytoplasm. It carries out the reaction tRNA(Tyr) + L-tyrosine + ATP = L-tyrosyl-tRNA(Tyr) + AMP + diphosphate + H(+). In terms of biological role, catalyzes the attachment of tyrosine to tRNA(Tyr) in a two-step reaction: tyrosine is first activated by ATP to form Tyr-AMP and then transferred to the acceptor end of tRNA(Tyr). The chain is Tyrosine--tRNA ligase from Caulobacter vibrioides (strain ATCC 19089 / CIP 103742 / CB 15) (Caulobacter crescentus).